We begin with the raw amino-acid sequence, 238 residues long: Ribosomal RNA small subunit methyltransferase G (238 aa).

Residues G78, F83, 129–130 (AE), and R148 contribute to the S-adenosyl-L-methionine site. The disordered stretch occupies residues 217–238 (KKKETPKKYPRKAGTPAKSPIK).

This sequence belongs to the methyltransferase superfamily. RNA methyltransferase RsmG family.

It localises to the cytoplasm. Its function is as follows. Specifically methylates the N7 position of a guanine in 16S rRNA. The chain is Ribosomal RNA small subunit methyltransferase G from Lactococcus lactis subsp. cremoris (strain SK11).